The following is a 355-amino-acid chain: MLALGLMSGTSLDGVDVALLETDGETVARFGPATTVPYGDEQRIALMGVLGGKGPVEQVERDFTLFHAQVVRDFLAAQGIDAATVGVAGFHGHTILHAPAERRTWQIGDGALLASEIGIPVVNDFRSADVAAGGQGAPLVPVYHRALAAGLEAPLAILNLGGVGNVTWISDDGSLLAFDTGPGNALLDDWALAHTGRPVDVDGRLAAAGKVRRDAVEAFLHHTYFDCQPPKSVDRDEFHALAWELVKGCSAEDGAATLTAFTAAAVALAAYSFPRPVKRWLVTGGGRRNPEMMTALSRGLSAPVEPVEAVGWNGDALEAQAFAFLAVRSLAGKMLTYPETTGAPAPQTGGRHHVP.

9–16 serves as a coordination point for ATP; sequence GTSLDGVD.

This sequence belongs to the anhydro-N-acetylmuramic acid kinase family.

It catalyses the reaction 1,6-anhydro-N-acetyl-beta-muramate + ATP + H2O = N-acetyl-D-muramate 6-phosphate + ADP + H(+). Its pathway is amino-sugar metabolism; 1,6-anhydro-N-acetylmuramate degradation. The protein operates within cell wall biogenesis; peptidoglycan recycling. In terms of biological role, catalyzes the specific phosphorylation of 1,6-anhydro-N-acetylmuramic acid (anhMurNAc) with the simultaneous cleavage of the 1,6-anhydro ring, generating MurNAc-6-P. Is required for the utilization of anhMurNAc either imported from the medium or derived from its own cell wall murein, and thus plays a role in cell wall recycling. This is Anhydro-N-acetylmuramic acid kinase from Paramagnetospirillum magneticum (strain ATCC 700264 / AMB-1) (Magnetospirillum magneticum).